Consider the following 240-residue polypeptide: Cell division protein FtsQ (240 aa).

At 1 to 7 the chain is on the cytoplasmic side; the sequence is MTGPGLR. Residues 8–28 traverse the membrane as a helical segment; that stretch reads LLAGMGLAGALVLGLSLWLHF. Topologically, residues 29-240 are periplasmic; sequence DPDQHLPIGS…EADNDGGNAR (212 aa). A POTRA domain is found at 34 to 102; the sequence is LPIGSIQITG…DTLEVHVTEP (69 aa).

Belongs to the FtsQ/DivIB family. FtsQ subfamily. In terms of assembly, part of a complex composed of FtsB, FtsL and FtsQ.

The protein resides in the cell inner membrane. In terms of biological role, essential cell division protein. May link together the upstream cell division proteins, which are predominantly cytoplasmic, with the downstream cell division proteins, which are predominantly periplasmic. May control correct divisome assembly. This chain is Cell division protein FtsQ, found in Thioalkalivibrio sp. (strain K90mix).